A 620-amino-acid polypeptide reads, in one-letter code: Chaperone protein HscA homolog (620 aa).

The protein belongs to the heat shock protein 70 family.

Functionally, chaperone involved in the maturation of iron-sulfur cluster-containing proteins. Has a low intrinsic ATPase activity which is markedly stimulated by HscB. The chain is Chaperone protein HscA homolog from Shewanella sediminis (strain HAW-EB3).